Reading from the N-terminus, the 233-residue chain is Bcl-2-like protein 1 (233 aa).

Positions 4–24 match the BH4 motif; the sequence is SNRELVVDFLSYKLSQKGYSW. The tract at residues 27–73 is disordered; it reads FSDVEENRTEAPEETEAERETPSAINGNPSWHLADSPAVNGATGHSS. At serine 49 the chain carries Phosphoserine; by PLK3. Serine 62 carries the post-translational modification Phosphoserine; by CDK1. The short motif at 86 to 100 is the BH3 element; it reads VKQALREAGDEFELR. Residues 129–148 carry the BH1 motif; sequence ELFRDGVNWGRIVAFFSFGG. The short motif at 180–195 is the BH2 element; the sequence is PWIQENGGWDTFVDLY. Residues 210–226 traverse the membrane as a helical segment; it reads FNRWFLTGMTVAGVVLL.

This sequence belongs to the Bcl-2 family. As to quaternary structure, homodimer. Interacts with BAD. Interacts with PGAM5. Interacts with HEBP2. Interacts with p53/TP53 and BBC3; interaction with BBC3 disrupts the interaction with p53/TP53. Interacts with ATP5F1A and ATP5F1B; the interactions mediate the association of isoform Bcl-X(L) with the mitochondrial membrane ATP synthase F(1)F(0) ATP synthase. Interacts with VDAC1. Interacts with BCL2L11 (via BH3). Interacts with RNF183. Interacts with GIMAP3/IAN4 and GIMAP5/IAN5. Interacts with GIMAP5 and HSPA8/HSC70; the interaction between HSPA8 and BCL2L1 is impaired in the absence of GIMAP5. Interacts with isoform 4 of CLU; this interaction releases and activates BAX and promotes cell death. Forms heterodimers with BAX, BAK or BCL2; heterodimerization with BAX does not seem to be required for anti-apoptotic activity. Interacts with isoform 1 of SIVA1; the interaction inhibits the anti-apoptotic activity. Interacts with IKZF3. Interacts with RTL10/BOP. Interacts with DNM1L and CLTA; DNM1L and BCL2L1 isoform BCL-X(L) may form a complex in synaptic vesicles that also contains clathrin and MFF. Interacts (via the loop between motifs BH4 and BH3) with NLRP1 (via LRR repeats), but not with NLRP2, NLRP3, NLRP4, PYCARD, nor MEFV. Interacts with BECN1. Proteolytically cleaved by caspases during apoptosis. The cleaved protein, lacking the BH4 motif, has pro-apoptotic activity. Post-translationally, phosphorylated on Ser-62 by CDK1. This phosphorylation is partial in normal mitotic cells, but complete in G2-arrested cells upon DNA-damage, thus promoting subsequent apoptosis probably by triggering caspases-mediated proteolysis. Phosphorylated by PLK3, leading to regulate the G2 checkpoint and progression to cytokinesis during mitosis. Phosphorylation at Ser-49 appears during the S phase and G2, disappears rapidly in early mitosis during prometaphase, metaphase and early anaphase, and re-appears during telophase and cytokinesis. In terms of processing, ubiquitinated by RNF183 during prolonged ER stress, leading to degradation by the proteosome. Widely expressed, with highest levels in the brain, thymus, bone marrow, and kidney. Bcl-X(L) and Bcl-X(delta-TM) expression is enhanced in B- and T-lymphocytes that have been activated.

Its subcellular location is the mitochondrion membrane. The protein resides in the nucleus membrane. The protein localises to the cytoplasm. It is found in the cytoskeleton. It localises to the microtubule organizing center. Its subcellular location is the centrosome. The protein resides in the mitochondrion inner membrane. The protein localises to the mitochondrion outer membrane. It is found in the mitochondrion matrix. It localises to the cytoplasmic vesicle. Its subcellular location is the secretory vesicle. The protein resides in the synaptic vesicle membrane. The protein localises to the cytosol. Its function is as follows. Potent inhibitor of cell death. Inhibits activation of caspases. Appears to regulate cell death by blocking the voltage-dependent anion channel (VDAC) by binding to it and preventing the release of the caspase activator, CYC1, from the mitochondrial membrane. Also acts as a regulator of G2 checkpoint and progression to cytokinesis during mitosis. Functionally, isoform Bcl-X(L) also regulates presynaptic plasticity, including neurotransmitter release and recovery, number of axonal mitochondria as well as size and number of synaptic vesicle clusters. During synaptic stimulation, increases ATP availability from mitochondria through regulation of mitochondrial membrane ATP synthase F(1)F(0) activity and regulates endocytic vesicle retrieval in hippocampal neurons through association with DMN1L and stimulation of its GTPase activity in synaptic vesicles. May attenuate inflammation impairing NLRP1-inflammasome activation, hence CASP1 activation and IL1B release. Isoform Bcl-X(S) promotes apoptosis. This chain is Bcl-2-like protein 1 (Bcl2l1), found in Mus musculus (Mouse).